The primary structure comprises 331 residues: ABSCISIC ACID-INSENSITIVE 5-like protein 1 (331 aa).

2 positions are modified to phosphoserine: Ser40 and Ser98. Thr143 bears the Phosphothreonine mark. A bZIP domain is found at 247–310 (MERRQRRMIK…RQEIISRSKQ (64 aa)). Residues 249–268 (RRQRRMIKNRESAARSRARR) are basic motif. Residues 275-289 (LELELNNLTEENTKL) form a leucine-zipper region. Over residues 296-320 (NEKKRRQEIISRSKQVTKEKSGDKL) the composition is skewed to basic and acidic residues. The tract at residues 296 to 331 (NEKKRRQEIISRSKQVTKEKSGDKLRKIRRMASAGW) is disordered.

Belongs to the bZIP family. ABI5 subfamily. DNA-binding heterodimer with AREB3/DPBF3 or EEL/DPBF4. Interacts with the AFP proteins AFP1, AFP2 and AFP3. Predominantly expressed in seeds.

It localises to the nucleus. Could participate in abscisic acid-regulated gene expression during seed development. This Arabidopsis thaliana (Mouse-ear cress) protein is ABSCISIC ACID-INSENSITIVE 5-like protein 1 (DPBF2).